The following is a 295-amino-acid chain: Protease HtpX (295 aa).

A run of 2 helical transmembrane segments spans residues 4 to 24 (IFLF…VLRL) and 42 to 62 (ALLI…LAIS). Residue His-147 participates in Zn(2+) binding. Residue Glu-148 is part of the active site. Position 151 (His-151) interacts with Zn(2+). 2 helical membrane-spanning segments follow: residues 155–175 (GDMV…IFLA) and 197–217 (FWIT…IIVM). Position 224 (Glu-224) interacts with Zn(2+).

This sequence belongs to the peptidase M48B family. Requires Zn(2+) as cofactor.

The protein localises to the cell inner membrane. This Thioalkalivibrio sulfidiphilus (strain HL-EbGR7) protein is Protease HtpX.